Reading from the N-terminus, the 226-residue chain is Neuron-specific vesicular protein calcyon (226 aa).

The segment at 1–23 (MVKLGCSFSGKPGKETGDQDGAA) is disordered. Over 1–88 (MVKLGCSFSG…EEGRRLPTAR (88 aa)) the chain is Extracellular. A helical transmembrane segment spans residues 89 to 109 (MIAFAMALLGCVLIMYKAIWY). Residues 110–226 (DQFTCPDGFL…AEDVPSQSPK (117 aa)) lie on the Cytoplasmic side of the membrane. Residues 189 to 226 (TAAAAAAAEGNEPSGKPLDMREKEDPQKAEDVPSQSPK) are disordered. The span at 206 to 219 (LDMREKEDPQKAED) shows a compositional bias: basic and acidic residues.

The protein belongs to the NSG family. In terms of assembly, interacts with CLTA. As to expression, expressed exclusively in neurons (at protein level). In all age groups, expressed at significantly higher levels in the medial prefrontal and orbital frontal cortices of spontaneously hypertensive rats (SHR), a model of attention deficit-hyperactivity disorder, than Wistar Kyoto (WKY) animals. In the motor cortex, dorsal striatum and nucleus accumbens, expression is significantly elevated in SHR only in younger animals.

It is found in the cytoplasmic vesicle membrane. The protein resides in the cell membrane. Interacts with clathrin light chain A and stimulates clathrin self-assembly and clathrin-mediated endocytosis. The chain is Neuron-specific vesicular protein calcyon (Caly) from Rattus norvegicus (Rat).